The sequence spans 467 residues: Argininosuccinate lyase (467 aa).

It belongs to the lyase 1 family. Argininosuccinate lyase subfamily.

Its subcellular location is the cytoplasm. It carries out the reaction 2-(N(omega)-L-arginino)succinate = fumarate + L-arginine. It participates in amino-acid biosynthesis; L-arginine biosynthesis; L-arginine from L-ornithine and carbamoyl phosphate: step 3/3. This chain is Argininosuccinate lyase, found in Chromohalobacter salexigens (strain ATCC BAA-138 / DSM 3043 / CIP 106854 / NCIMB 13768 / 1H11).